Reading from the N-terminus, the 320-residue chain is Cytochrome f (320 aa).

An N-terminal signal peptide occupies residues 1 to 35 (MQTINTFSWIKEQITRSISISLILYIITRSSIANA). Heme is bound by residues Tyr36, Cys56, Cys59, and His60. A helical membrane pass occupies residues 286 to 305 (IQGLLFFFASVILAQIFLVL).

It belongs to the cytochrome f family. The 4 large subunits of the cytochrome b6-f complex are cytochrome b6, subunit IV (17 kDa polypeptide, petD), cytochrome f and the Rieske protein, while the 4 small subunits are PetG, PetL, PetM and PetN. The complex functions as a dimer. Requires heme as cofactor.

Its subcellular location is the plastid. It is found in the chloroplast thylakoid membrane. Component of the cytochrome b6-f complex, which mediates electron transfer between photosystem II (PSII) and photosystem I (PSI), cyclic electron flow around PSI, and state transitions. This Spinacia oleracea (Spinach) protein is Cytochrome f (petA).